The following is a 179-amino-acid chain: Large ribosomal subunit protein uL10 (179 aa).

The protein belongs to the universal ribosomal protein uL10 family. In terms of assembly, part of the ribosomal stalk of the 50S ribosomal subunit. The N-terminus interacts with L11 and the large rRNA to form the base of the stalk. The C-terminus forms an elongated spine to which L12 dimers bind in a sequential fashion forming a multimeric L10(L12)X complex.

In terms of biological role, forms part of the ribosomal stalk, playing a central role in the interaction of the ribosome with GTP-bound translation factors. This chain is Large ribosomal subunit protein uL10, found in Thermotoga petrophila (strain ATCC BAA-488 / DSM 13995 / JCM 10881 / RKU-1).